The primary structure comprises 473 residues: Deoxyribodipyrimidine photo-lyase (473 aa).

A Photolyase/cryptochrome alpha/beta domain is found at 2-134 (PTHLVWFRRD…ICEGFDDSVI (133 aa)). Positions 109 and 110 each coordinate (6R)-5,10-methylene-5,6,7,8-tetrahydrofolate. Tyr-224 lines the FAD pocket. Residue Arg-228 coordinates DNA. Residue 236–240 (TSRLS) coordinates FAD. 2 interaction with DNA regions span residues 276–283 (ELIWREFY) and 343–344 (NR). 374 to 376 (DGD) is an FAD binding site. Residue Gln-406 coordinates DNA.

It belongs to the DNA photolyase class-1 family. In terms of assembly, monomer. Requires FAD as cofactor. It depends on (6R)-5,10-methylene-5,6,7,8-tetrahydrofolate as a cofactor.

The enzyme catalyses cyclobutadipyrimidine (in DNA) = 2 pyrimidine residues (in DNA).. Its function is as follows. Involved in repair of UV radiation-induced DNA damage. Catalyzes the light-dependent monomerization (300-600 nm) of cyclobutyl pyrimidine dimers (in cis-syn configuration), which are formed between adjacent bases on the same DNA strand upon exposure to ultraviolet radiation. The chain is Deoxyribodipyrimidine photo-lyase (phrB) from Salmonella typhimurium (strain LT2 / SGSC1412 / ATCC 700720).